The sequence spans 225 residues: Biosynthetic peptidoglycan transglycosylase (225 aa).

Residues 8–28 (VLLIFIGAILLIQLWIFSSLV) traverse the membrane as a helical segment.

This sequence belongs to the glycosyltransferase 51 family.

Its subcellular location is the cell inner membrane. It catalyses the reaction [GlcNAc-(1-&gt;4)-Mur2Ac(oyl-L-Ala-gamma-D-Glu-L-Lys-D-Ala-D-Ala)](n)-di-trans,octa-cis-undecaprenyl diphosphate + beta-D-GlcNAc-(1-&gt;4)-Mur2Ac(oyl-L-Ala-gamma-D-Glu-L-Lys-D-Ala-D-Ala)-di-trans,octa-cis-undecaprenyl diphosphate = [GlcNAc-(1-&gt;4)-Mur2Ac(oyl-L-Ala-gamma-D-Glu-L-Lys-D-Ala-D-Ala)](n+1)-di-trans,octa-cis-undecaprenyl diphosphate + di-trans,octa-cis-undecaprenyl diphosphate + H(+). It participates in cell wall biogenesis; peptidoglycan biosynthesis. In terms of biological role, peptidoglycan polymerase that catalyzes glycan chain elongation from lipid-linked precursors. This is Biosynthetic peptidoglycan transglycosylase from Acinetobacter baumannii (strain AB307-0294).